The primary structure comprises 470 residues: MNPNQKIITIGSISLGLVVFNVLLHVVSIIVTVLVLGRGGNNGICNETVVREYNETVRIEKITQWHNTSVVEYVPYWNEGTFMNNSEAICDVKGFAPFSKDNGIRIGSRGHVFVIREPFVSCSPTECRTFFLTQGSLLNDRHSNGTVKDRSPFRTLMSVEVGQSPNVYQARFEAVAWSATACHDGKKWMTIGVTGPDSKAVAVVHYGGVPTDVVNSWAGDILRTQESSCTCIQGNCYWVMTDGPANRQAQYRIYKANQGKIVGQTDVSFNGGHIEECSCYPNDGKVECVCRDNWTGTNRPVLVISPDLSYRVGYLCAGLPSDTPRGEDAQFTGSCTSPMGNQGYGVKGFGFRQGTDVWMGRTISRTSRSGFEILRVKNGWTQTSKEQVRKQVVVDNLNWSGYSGSFTLPVELSGKDCLVPCFWVEMIRGKPEEKTIWTSSSSIVMCGVDYEVADWSWHDGAILPFDIDKM.

At 1–14 the chain is on the intravirion side; the sequence is MNPNQKIITIGSIS. The interval 11 to 32 is involved in apical transport and lipid raft association; that stretch reads GSISLGLVVFNVLLHVVSIIVT. The chain crosses the membrane as a helical span at residues 15-35; that stretch reads LGLVVFNVLLHVVSIIVTVLV. The segment at 32 to 86 is hypervariable stalk region; sequence TVLVLGRGGNNGICNETVVREYNETVRIEKITQWHNTSVVEYVPYWNEGTFMNNS. Residues 36–470 are Virion surface-facing; sequence LGRGGNNGIC…AILPFDIDKM (435 aa). Asparagine 46, asparagine 54, asparagine 67, and asparagine 84 each carry an N-linked (GlcNAc...) asparagine; by host glycan. The tract at residues 89-470 is head of neuraminidase; that stretch reads ICDVKGFAPF…AILPFDIDKM (382 aa). 8 cysteine pairs are disulfide-bonded: cysteine 90–cysteine 417, cysteine 122–cysteine 127, cysteine 182–cysteine 229, cysteine 231–cysteine 236, cysteine 277–cysteine 290, cysteine 279–cysteine 288, cysteine 316–cysteine 335, and cysteine 421–cysteine 446. Residue arginine 116 participates in substrate binding. Residue asparagine 144 is glycosylated (N-linked (GlcNAc...) asparagine; by host). The active-site Proton donor/acceptor is aspartate 149. A substrate-binding site is contributed by arginine 150. Residue 275–276 participates in substrate binding; it reads EE. Arginine 291 provides a ligand contact to substrate. Aspartate 292 serves as a coordination point for Ca(2+). Residue asparagine 293 is glycosylated (N-linked (GlcNAc...) asparagine; by host). Glycine 296 and aspartate 322 together coordinate Ca(2+). A substrate-binding site is contributed by arginine 368. Residue asparagine 398 is glycosylated (N-linked (GlcNAc...) asparagine; by host). The Nucleophile role is filled by tyrosine 402.

It belongs to the glycosyl hydrolase 34 family. Homotetramer. It depends on Ca(2+) as a cofactor. In terms of processing, N-glycosylated.

Its subcellular location is the virion membrane. It localises to the host apical cell membrane. The enzyme catalyses Hydrolysis of alpha-(2-&gt;3)-, alpha-(2-&gt;6)-, alpha-(2-&gt;8)- glycosidic linkages of terminal sialic acid residues in oligosaccharides, glycoproteins, glycolipids, colominic acid and synthetic substrates.. Inhibited by the neuraminidase inhibitors zanamivir (Relenza) and oseltamivir (Tamiflu). These drugs interfere with the release of progeny virus from infected cells and are effective against all influenza strains. Resistance to neuraminidase inhibitors is quite rare. In terms of biological role, catalyzes the removal of terminal sialic acid residues from viral and cellular glycoconjugates. Cleaves off the terminal sialic acids on the glycosylated HA during virus budding to facilitate virus release. Additionally helps virus spread through the circulation by further removing sialic acids from the cell surface. These cleavages prevent self-aggregation and ensure the efficient spread of the progeny virus from cell to cell. Otherwise, infection would be limited to one round of replication. Described as a receptor-destroying enzyme because it cleaves a terminal sialic acid from the cellular receptors. May facilitate viral invasion of the upper airways by cleaving the sialic acid moieties on the mucin of the airway epithelial cells. Likely to plays a role in the budding process through its association with lipid rafts during intracellular transport. May additionally display a raft-association independent effect on budding. Plays a role in the determination of host range restriction on replication and virulence. Sialidase activity in late endosome/lysosome traffic seems to enhance virus replication. The sequence is that of Neuraminidase from Aves (Horse).